We begin with the raw amino-acid sequence, 492 residues long: NADH-quinone oxidoreductase subunit N (492 aa).

14 helical membrane passes run 13–33 (MMTPEFIVLGTALILSLMDLF), 42–62 (PLAWIAFVGVAIALIATIGLI), 79–99 (FGKAFKLLLLAGGALSLLLAF), 111–131 (GEFYYLLLCALLGAMIMASSG), 133–153 (LITLFVGLELLSISSYILAGI), 168–188 (VINGGISTAITLFGMSYIFGL), 211–231 (YILAIAFLMMLVGLSFKISSV), 251–271 (FLSVVSKTAGFVIVLRLFITI), 284–304 (SLLFSMQDYIAFLAGATMIIG), 318–340 (FAYSSIAHAGYILVGFAAMSWVM), 344–366 (IWFYLLAYLFMNLGAFAILQRIS), 388–408 (AVAMGIFLLSLAGIPGTAGFI), 426–446 (VLAAVMIATTVVSYVYYFGIF), and 463–483 (PIGLAMVVVLCALGTLLFGVV).

The protein belongs to the complex I subunit 2 family. As to quaternary structure, NDH-1 is composed of 14 different subunits. Subunits NuoA, H, J, K, L, M, N constitute the membrane sector of the complex.

It is found in the cell membrane. The catalysed reaction is a quinone + NADH + 5 H(+)(in) = a quinol + NAD(+) + 4 H(+)(out). NDH-1 shuttles electrons from NADH, via FMN and iron-sulfur (Fe-S) centers, to quinones in the respiratory chain. The immediate electron acceptor for the enzyme in this species is believed to be a menaquinone. Couples the redox reaction to proton translocation (for every two electrons transferred, four hydrogen ions are translocated across the cytoplasmic membrane), and thus conserves the redox energy in a proton gradient. This is NADH-quinone oxidoreductase subunit N from Geobacillus sp. (strain WCH70).